We begin with the raw amino-acid sequence, 660 residues long: Pseudouridylate synthase 7 homolog (660 aa).

The tract at residues 1–99 is disordered; it reads MEMTSTSLKR…EAGEEEEAES (99 aa). At Ser7 the chain carries Phosphoserine. Residues 22-32 are compositionally biased toward basic and acidic residues; sequence TPHDETKKQKV. Residues 76–99 show a composition bias toward acidic residues; it reads QEEEEEEEEEDGLSEAGEEEEAES. Ser126 carries the post-translational modification Phosphoserine. Asp293 serves as the catalytic Nucleophile. The TRUD domain maps to 369 to 579; the sequence is GFINYYGMQR…SGAYRRIIIR (211 aa).

Belongs to the pseudouridine synthase TruD family. In terms of assembly, interacts with SIRT1.

Its subcellular location is the nucleus. The catalysed reaction is a uridine in tRNA = a pseudouridine in tRNA. It carries out the reaction uridine(13) in tRNA = pseudouridine(13) in tRNA. The enzyme catalyses a uridine in mRNA = a pseudouridine in mRNA. Functionally, pseudouridylate synthase that catalyzes pseudouridylation of RNAs. Acts as a regulator of protein synthesis in embryonic stem cells by mediating pseudouridylation of RNA fragments derived from tRNAs (tRFs): pseudouridylated tRFs inhibit translation by targeting the translation initiation complex. Also catalyzes pseudouridylation of mRNAs: mediates pseudouridylation of mRNAs with the consensus sequence 5'-UGUAG-3'. Acts as a regulator of pre-mRNA splicing by mediating pseudouridylation of pre-mRNAs at locations associated with alternatively spliced regions. Pseudouridylation of pre-mRNAs near splice sites directly regulates mRNA splicing and mRNA 3'-end processing. In addition to mRNAs and tRNAs, binds other types of RNAs, such as snRNAs, Y RNAs and vault RNAs, suggesting that it can catalyze pseudouridylation of many RNA types. This chain is Pseudouridylate synthase 7 homolog, found in Mus musculus (Mouse).